The chain runs to 70 residues: Small ribosomal subunit protein bS21 (70 aa).

Belongs to the bacterial ribosomal protein bS21 family.

This Campylobacter jejuni subsp. jejuni serotype O:23/36 (strain 81-176) protein is Small ribosomal subunit protein bS21.